A 292-amino-acid polypeptide reads, in one-letter code: Small ribosomal subunit biogenesis GTPase RsgA (292 aa).

The CP-type G domain occupies 64–221 (RSELFRPAVA…LVDTPGFSSL (158 aa)). GTP contacts are provided by residues 113–116 (NKMD) and 164–172 (GPSGVGKST). Residues cysteine 245, cysteine 250, histidine 252, and cysteine 258 each coordinate Zn(2+).

Belongs to the TRAFAC class YlqF/YawG GTPase family. RsgA subfamily. As to quaternary structure, monomer. Associates with 30S ribosomal subunit, binds 16S rRNA. Requires Zn(2+) as cofactor.

It is found in the cytoplasm. One of several proteins that assist in the late maturation steps of the functional core of the 30S ribosomal subunit. Helps release RbfA from mature subunits. May play a role in the assembly of ribosomal proteins into the subunit. Circularly permuted GTPase that catalyzes slow GTP hydrolysis, GTPase activity is stimulated by the 30S ribosomal subunit. This Clostridium botulinum (strain Kyoto / Type A2) protein is Small ribosomal subunit biogenesis GTPase RsgA.